The chain runs to 180 residues: Endothelin-2 (180 aa).

A signal peptide spans 1-26 (MVALPTAWCSVALALLVALHEGKSQS). Positions 27-47 (AATSEEPPAPSARARGSHLRL) are excised as a propeptide. 2 disulfides stabilise this stretch: C50–C64 and C52–C60. Positions 71 to 180 (VNTPGQTAPY…ESSHSRWRKR (110 aa)) are excised as a propeptide. The interval 97 to 112 (CECYSTRDSACVTFCH) is endothelin-like. The tract at residues 157–180 (NFTRHQQQKATREPESSHSRWRKR) is disordered.

The protein belongs to the endothelin/sarafotoxin family.

It is found in the secreted. In terms of biological role, endothelins are endothelium-derived vasoconstrictor peptides. In Atelerix albiventris (Middle-African hedgehog), this protein is Endothelin-2 (EDN2).